The chain runs to 221 residues: Urease accessory protein UreF (221 aa).

It belongs to the UreF family. UreD, UreF and UreG form a complex that acts as a GTP-hydrolysis-dependent molecular chaperone, activating the urease apoprotein by helping to assemble the nickel containing metallocenter of UreC. The UreE protein probably delivers the nickel.

The protein resides in the cytoplasm. Required for maturation of urease via the functional incorporation of the urease nickel metallocenter. The chain is Urease accessory protein UreF from Microcystis aeruginosa (strain NIES-843 / IAM M-2473).